A 95-amino-acid chain; its full sequence is Translation initiation factor 1A (95 aa).

One can recognise an S1-like domain in the interval 6 to 80; it reads SRKNLRMPEE…EKADITWRYE (75 aa).

The protein belongs to the eIF-1A family.

Its function is as follows. Seems to be required for maximal rate of protein biosynthesis. Enhances ribosome dissociation into subunits and stabilizes the binding of the initiator Met-tRNA(I) to 40 S ribosomal subunits. This chain is Translation initiation factor 1A, found in Haloarcula marismortui (strain ATCC 43049 / DSM 3752 / JCM 8966 / VKM B-1809) (Halobacterium marismortui).